We begin with the raw amino-acid sequence, 124 residues long: Small ribosomal subunit protein uS12 (124 aa).

Asp-89 bears the 3-methylthioaspartic acid mark.

This sequence belongs to the universal ribosomal protein uS12 family. Part of the 30S ribosomal subunit. Contacts proteins S8 and S17. May interact with IF1 in the 30S initiation complex.

With S4 and S5 plays an important role in translational accuracy. Its function is as follows. Interacts with and stabilizes bases of the 16S rRNA that are involved in tRNA selection in the A site and with the mRNA backbone. Located at the interface of the 30S and 50S subunits, it traverses the body of the 30S subunit contacting proteins on the other side and probably holding the rRNA structure together. The combined cluster of proteins S8, S12 and S17 appears to hold together the shoulder and platform of the 30S subunit. This chain is Small ribosomal subunit protein uS12, found in Vibrio atlanticus (strain LGP32) (Vibrio splendidus (strain Mel32)).